We begin with the raw amino-acid sequence, 316 residues long: Glutathione synthetase (316 aa).

An ATP-grasp domain is found at 124 to 311; it reads NEKLAALLFP…IAGLLFDAIE (188 aa). 151-208 lines the ATP pocket; the sequence is FVLAHGQAVLKPLDGMGGRSIFRSGTGDPNLNVILETLTDGGRKLTLAQRFIPDITAG. Residues Glu-282 and Asn-284 each contribute to the Mg(2+) site.

The protein belongs to the prokaryotic GSH synthase family. Mg(2+) serves as cofactor. Mn(2+) is required as a cofactor.

The enzyme catalyses gamma-L-glutamyl-L-cysteine + glycine + ATP = glutathione + ADP + phosphate + H(+). The protein operates within sulfur metabolism; glutathione biosynthesis; glutathione from L-cysteine and L-glutamate: step 2/2. In Xanthomonas campestris pv. campestris (strain ATCC 33913 / DSM 3586 / NCPPB 528 / LMG 568 / P 25), this protein is Glutathione synthetase.